The sequence spans 197 residues: Adenylyl-sulfate kinase (197 aa).

33–40 (GLSGSGKS) is an ATP binding site. The active-site Phosphoserine intermediate is S107.

The protein belongs to the APS kinase family.

It catalyses the reaction adenosine 5'-phosphosulfate + ATP = 3'-phosphoadenylyl sulfate + ADP + H(+). It participates in sulfur metabolism; hydrogen sulfide biosynthesis; sulfite from sulfate: step 2/3. Catalyzes the synthesis of activated sulfate. The polypeptide is Adenylyl-sulfate kinase (Bacillus pumilus (strain SAFR-032)).